Here is a 524-residue protein sequence, read N- to C-terminus: Probable beta-1,4-xylosyltransferase IRX14 (524 aa).

Over 1–51 the chain is Cytoplasmic; that stretch reads MMKSLLPQSQLRRSAAAASAARSSGGGAGSGGADGAGSDGGAGGRAPATST. Residues 21 to 41 form a disordered region; sequence ARSSGGGAGSGGADGAGSDGG. The span at 24 to 41 shows a compositional bias: gly residues; that stretch reads SGGGAGSGGADGAGSDGG. The helical; Signal-anchor for type II membrane protein transmembrane segment at 52-71 threads the bilayer; the sequence is FWFLLHALCCLVSLFLGFRF. The Lumenal segment spans residues 72-524; it reads SRLLFFLLFS…SRSTTKRKEN (453 aa). N-linked (GlcNAc...) asparagine glycans are attached at residues asparagine 132, asparagine 135, asparagine 240, and asparagine 353. The disordered stretch occupies residues 492 to 524; that stretch reads AELVDSKQDQEGRRLSRTDRSSRSRSTTKRKEN. Over residues 495 to 513 the composition is skewed to basic and acidic residues; sequence VDSKQDQEGRRLSRTDRSS.

It belongs to the glycosyltransferase 43 family.

Its subcellular location is the golgi apparatus membrane. Its function is as follows. Probable beta-1,4-xylosyltransferase involved in xylan biosynthesis in cell walls. In Oryza sativa subsp. japonica (Rice), this protein is Probable beta-1,4-xylosyltransferase IRX14.